The following is an 84-amino-acid chain: Small ribosomal subunit protein bS20 (84 aa).

The tract at residues Met1–Met25 is disordered.

It belongs to the bacterial ribosomal protein bS20 family.

In terms of biological role, binds directly to 16S ribosomal RNA. In Pediococcus pentosaceus (strain ATCC 25745 / CCUG 21536 / LMG 10740 / 183-1w), this protein is Small ribosomal subunit protein bS20.